Consider the following 151-residue polypeptide: Inorganic triphosphatase (151 aa).

The 148-residue stretch at 1-148 (MTEIERKFLV…KRYKNKALAL (148 aa)) folds into the CYTH domain. The Proton acceptor role is filled by Tyr27.

In terms of assembly, homodimer.

It carries out the reaction triphosphate + H2O = phosphate + diphosphate. Its activity is regulated as follows. Activated by magnesium and mangenese ions, and inhibited by calcium, zinc and copper ions. In terms of biological role, involved in the hydrolysis of the beta-gamma-phosphoanhydride linkage of triphosphate-containing substrates (inorganic or nucleoside-linked). Catalyzes the hydrolysis of inorganic triphosphate (PPPi). The enzyme has a strong preference for linear PPPi compared with cyclic PPPi (cyclic trimetaphosphate) and to the linear P4. The longer chains polyphosphate are not hydrolyzed. It has only a slight thiamine triphosphatase (ThTPase) activity. Nucleoside triphosphatase activity is negligible in the presence of magnesium, but a small activity is observed in the presence of manganese, in particular with GTP. In Nitrosomonas europaea (strain ATCC 19718 / CIP 103999 / KCTC 2705 / NBRC 14298), this protein is Inorganic triphosphatase.